A 590-amino-acid polypeptide reads, in one-letter code: MEMYETLGKVGEGSYGTVMKCKHKNTGQIVAIKIFYERPEQSVNKIAMREIKFLKQFHHENLVNLIEVFRQKKKIHLVFEFIDHTVLDELQHYCHGLESKRLRKYLFQILRAIDYLHSNNIIHRDIKPENILVSQSGITKLCDFGFARTLAAPGDIYTDYVATRWYRAPELVLKDTSYGKPVDIWALGCMIIEMATGNPYLPSSSDLDLLHKIVLKVGNLSPHLQNIFSKSPIFAGVVLPQVQHPKNARKKYPKLNGLLADIVHACLQIDPADRISSSDLLHHEYFTRDGFIEKFMPELKAKLLQEAKVNSLIKPKESSKENELRKDERKTVYTNTLLSSSVLGKEIEKEKKPKEIKVRVIKVKGGRGDISEPKKKEYEGGLCQQDANENVHPMSPDTKLVTIEPPNPINPSTNCNGLKENPHCGGSMTMPPINLTNSNLMAANLNSNLFHPSVRLTERAKKRRTSSQSIGQVMPNSRQEDPGPIQSQMGKGIFNERTGHSDQMSNENKRKLNFSRSDRKEFHFPELPVTIQPKDTKGMEVKQIKMLKRESKKTDSSKIPTLLNVDQNQEKQENTGNAQTERKKNLPDVE.

The Protein kinase domain occupies 4–286; sequence YETLGKVGEG…SSDLLHHEYF (283 aa). ATP contacts are provided by residues 10 to 18 and Lys33; that span reads VGEGSYGTV. The [NKR]KIAxRE signature appears at 45–51; sequence KIAMREI. Asp125 serves as the catalytic Proton acceptor. Phosphothreonine is present on Thr158. Phosphotyrosine is present on Tyr160. Disordered stretches follow at residues 459 to 508 and 547 to 590; these read RAKK…SNEN and LKRE…PDVE. Residues 466 to 477 are compositionally biased toward polar residues; the sequence is SSQSIGQVMPNS. Basic and acidic residues-rich tracts occupy residues 547–556 and 580–590; these read LKRESKKTDS and TERKKNLPDVE.

Belongs to the protein kinase superfamily. CMGC Ser/Thr protein kinase family. CDC2/CDKX subfamily.

The protein localises to the cytoplasm. It carries out the reaction L-seryl-[protein] + ATP = O-phospho-L-seryl-[protein] + ADP + H(+). It catalyses the reaction L-threonyl-[protein] + ATP = O-phospho-L-threonyl-[protein] + ADP + H(+). This Macaca fascicularis (Crab-eating macaque) protein is Cyclin-dependent kinase-like 3.